The following is a 237-amino-acid chain: Ribonuclease PH (237 aa).

Phosphate is bound by residues Arg86 and 124–126 (GTR).

It belongs to the RNase PH family. As to quaternary structure, homohexameric ring arranged as a trimer of dimers.

The catalysed reaction is tRNA(n+1) + phosphate = tRNA(n) + a ribonucleoside 5'-diphosphate. Functionally, phosphorolytic 3'-5' exoribonuclease that plays an important role in tRNA 3'-end maturation. Removes nucleotide residues following the 3'-CCA terminus of tRNAs; can also add nucleotides to the ends of RNA molecules by using nucleoside diphosphates as substrates, but this may not be physiologically important. Probably plays a role in initiation of 16S rRNA degradation (leading to ribosome degradation) during starvation. This is Ribonuclease PH from Shewanella oneidensis (strain ATCC 700550 / JCM 31522 / CIP 106686 / LMG 19005 / NCIMB 14063 / MR-1).